Here is a 172-residue protein sequence, read N- to C-terminus: MAFRASGPAYQPLAPAASPARARVPAVAWIGVGAIVGAFALVAALVLVPPRSSWGLSPCDSGWQEFNAGCVAWDPTPVEHEQAVGGCSAPATLIPRAAAKHLAALTRVQAERSSGYWWVNGDGIRTCLRLVDSVSGIDEFCEELAIRICYYPRSPGGFVRFVTSIRNALGLP.

The Intravirion portion of the chain corresponds to 1–27; the sequence is MAFRASGPAYQPLAPAASPARARVPAV. Residues 28 to 48 form a helical; Signal-anchor for type II membrane protein membrane-spanning segment; sequence AWIGVGAIVGAFALVAALVLV. At 49 to 172 the chain is on the virion surface side; sequence PPRSSWGLSP…TSIRNALGLP (124 aa).

Belongs to the herpesviridae HHV-1 UL45 family.

Its subcellular location is the virion membrane. In terms of biological role, important virulence factor of HSV neurotropism. Seems to be required for glycoprotein B-induced fusion. Dispensable for growth in vitro. This is Envelope protein UL45 from Homo sapiens (Human).